The sequence spans 509 residues: MENLSERFNALQDLLMNIYEAAEQTLEAQIKHWQTLRQEAVLLYFARQRGVTRLGYQPVPVKAVSEAKAKEAIAMVLQLQSLQTSEYASETWTLVDTSIETFRSAPDGHFKKGPVPVEVIYDNDADNANLYTMWTYVYYMEDDVWHKARSGVNETGIYYLQGTFKYYYVLFADDARKYSQTGQWEVKVNKETVFAPVTSSTPPGSPGGQADTNASSKTSTTTTATVDSTTKQLTTSEQPQQTETKGRKYGRRPSSRTRRPQAKQRRSRSRHRSSRSRSRSQSRSHTPTTRSATTRSRSPSLAKTGVQRVSTRSRSRSTSRRGGRRRRSRSPSTSSSTTTTNKRSRVRAETTGSRGARGGRGARGGSGGGRRRGRSSSSTSPAHKRSREHSVRSRGVSPDQVGKSLRSVSSKHTGRLGRLLEEALDPPVILVRGEANTLKCFRNRAKIKYMGLYRSFSTTWSWVAGDGTERLGRPRMLISFSSYNQRRDFDDVVRYPKGVEKSYGNLDSL.

The segment at 1 to 200 (MENLSERFNA…ETVFAPVTSS (200 aa)) is transactivation domain. The interval 197–413 (VTSSTPPGSP…SLRSVSSKHT (217 aa)) is disordered. Low complexity predominate over residues 211–231 (DTNASSKTSTTTTATVDSTTK). Positions 232 to 243 (QLTTSEQPQQTE) are enriched in polar residues. Residues 247–282 (RKYGRRPSSRTRRPQAKQRRSRSRHRSSRSRSRSQS) show a composition bias toward basic residues. A compositionally biased stretch (low complexity) spans 283-310 (RSHTPTTRSATTRSRSPSLAKTGVQRVS). Residues 311-329 (TRSRSRSTSRRGGRRRRSR) show a composition bias toward basic residues. The segment covering 330-341 (SPSTSSSTTTTN) has biased composition (low complexity). A compositionally biased stretch (gly residues) spans 355-368 (GARGGRGARGGSGG). Residues 425–509 (DPPVILVRGE…EKSYGNLDSL (85 aa)) are DNA-binding domain.

It belongs to the papillomaviridae E2 protein family. Binds DNA as homodimer. Interacts with protein E1; this interaction greatly increases E1 DNA-binding activity. Interacts with protein L1; this interaction enhances E2-dependent replication and transcription activation. Interacts with protein L2; this interaction inhibits E2 transcriptional activity but not DNA replication function E2. Interacts with protein E7; this interaction inhibits E7 oncogenic activity. Interacts with host TAF1; this interaction modulates E2-dependent transcriptional regulation. Interacts with host BRD4; this interaction mediates E2 transcriptional activation function. Additionally, the interaction with host BRD4 on mitotic chromosomes mediates tethering of the viral genome. Interacts with host TOPBP1; this interaction is required for optimal viral DNA replication. In terms of processing, phosphorylated.

It localises to the host nucleus. Its function is as follows. Plays a role in the initiation of viral DNA replication. A dimer of E2 interacts with a dimer of E1 in order to improve specificity of E1 DNA binding activity. Once the complex recognizes and binds DNA at specific sites, the E2 dimer is removed from DNA. E2 also regulates viral transcription through binding to the E2RE response element (5'-ACCNNNNNNGGT-3') present in multiple copies in the regulatory regions of the viral genome. Activates or represses transcription depending on E2RE's position with regards to proximal promoter elements including the TATA-box. Repression occurs by sterically hindering the assembly of the transcription initiation complex. The polypeptide is Regulatory protein E2 (Human papillomavirus 36).